The chain runs to 478 residues: ATP synthase subunit beta (478 aa).

164–171 (GGAGVGKT) lines the ATP pocket.

This sequence belongs to the ATPase alpha/beta chains family. In terms of assembly, F-type ATPases have 2 components, CF(1) - the catalytic core - and CF(0) - the membrane proton channel. CF(1) has five subunits: alpha(3), beta(3), gamma(1), delta(1), epsilon(1). CF(0) has three main subunits: a(1), b(2) and c(9-12). The alpha and beta chains form an alternating ring which encloses part of the gamma chain. CF(1) is attached to CF(0) by a central stalk formed by the gamma and epsilon chains, while a peripheral stalk is formed by the delta and b chains.

The protein resides in the cell membrane. The enzyme catalyses ATP + H2O + 4 H(+)(in) = ADP + phosphate + 5 H(+)(out). Functionally, produces ATP from ADP in the presence of a proton gradient across the membrane. The catalytic sites are hosted primarily by the beta subunits. The sequence is that of ATP synthase subunit beta from Streptomyces coelicolor (strain ATCC BAA-471 / A3(2) / M145).